The primary structure comprises 756 residues: MGTRILDLLQLQNLTKRDPSAYKEEFLLQYQHYLTQLQIFQLKPTKEFKHFSQLVSYLSHVCVCYPKELSEFPKQISDLLENNCNNLEPELRRILAKSLILMRNRNLLPQIQMLSLFFKLFRVHDKPLRSLLYSHIVADIKNTNLKQKNQKLNRTLQNFMFTMMNDDSEIASKMSLKVMIELFRKKIWHDTKTVNVISNGVFSKNSKILITTLNFFLHIDNPDKPDEEEEDEAVKEKRAKDNFRKKSLAHRVGKKTKGRITRLAKSKVDLKKAKQEEDNKLQPNFPAIELIHDPQGYCDKLFNVLVKTTEKFETRIMIMNFISRLIYVHKLMVYNFYPFLQKYLQPHQKNITYLLAVLAQSCHELVDPDVLKPLVMTIAKYFVNDGCGSDVIAIGLNTIRSICSRCPLAIDTVLLADLIQYREKKEKGVAMASKSLLQFFKDNYPSMLPKKERGKNKTDIGLLAFGHQKVSQGIDGLDLLMDEELNARLDAIEAGEEFESDDDSDSDSDDEGWEDVNTTTADDDNNSEWVSDDDDEEGEEDEEVEDEEDEEEVDEEELEDDEEGDWESGEEIEGDDDDDEEWEEVEEEVEEEEEEEIKPTKKKSQQKEKVEVLRTDDIKVLTDEELIRIRKLRILKEARENNKQYEDMDQDDDENGENVHGLIRPEDLQGAHKKKKEEKLERIARAKEGRDGGYGSKASRRDKTGKSTTNEYKAKVTKPFVLTLKTKKVRGKSLKSFRDKQIGQREHSARQKRGRH.

Residues 227–282 (EEEEDEAVKEKRAKDNFRKKSLAHRVGKKTKGRITRLAKSKVDLKKAKQEEDNKLQ) are a coiled coil. Acidic residues-rich tracts occupy residues 494-514 (AGEE…EGWE) and 521-596 (ADDD…EEEE). Disordered regions lie at residues 494–615 (AGEE…VLRT) and 638–756 (AREN…RGRH). Over residues 605–615 (QQKEKVEVLRT) the composition is skewed to basic and acidic residues. The span at 647-656 (DMDQDDDENG) shows a compositional bias: acidic residues. A compositionally biased stretch (basic and acidic residues) spans 677-691 (EEKLERIARAKEGRD). Residues 725-735 (KTKKVRGKSLK) show a composition bias toward basic residues. Residues 736 to 749 (SFRDKQIGQREHSA) are compositionally biased toward basic and acidic residues.

Belongs to the SDA1 family.

The protein resides in the nucleus. It localises to the nucleolus. Required for 60S pre-ribosomal subunits export to the cytoplasm. In Dictyostelium discoideum (Social amoeba), this protein is Protein SDA1 homolog (sdad1).